An 84-amino-acid polypeptide reads, in one-letter code: Cell division topological specificity factor (84 aa).

It belongs to the MinE family.

In terms of biological role, prevents the cell division inhibition by proteins MinC and MinD at internal division sites while permitting inhibition at polar sites. This ensures cell division at the proper site by restricting the formation of a division septum at the midpoint of the long axis of the cell. This Burkholderia cenocepacia (strain HI2424) protein is Cell division topological specificity factor.